A 307-amino-acid chain; its full sequence is tRNA pseudouridine synthase B (307 aa).

The active-site Nucleophile is D47.

The protein belongs to the pseudouridine synthase TruB family. Type 1 subfamily.

The catalysed reaction is uridine(55) in tRNA = pseudouridine(55) in tRNA. In terms of biological role, responsible for synthesis of pseudouridine from uracil-55 in the psi GC loop of transfer RNAs. The sequence is that of tRNA pseudouridine synthase B from Chromohalobacter salexigens (strain ATCC BAA-138 / DSM 3043 / CIP 106854 / NCIMB 13768 / 1H11).